The primary structure comprises 203 residues: Urease accessory protein UreG (203 aa).

14–21 (GPVGSGKT) lines the GTP pocket.

The protein belongs to the SIMIBI class G3E GTPase family. UreG subfamily. As to quaternary structure, homodimer. UreD, UreF and UreG form a complex that acts as a GTP-hydrolysis-dependent molecular chaperone, activating the urease apoprotein by helping to assemble the nickel containing metallocenter of UreC. The UreE protein probably delivers the nickel.

The protein resides in the cytoplasm. Facilitates the functional incorporation of the urease nickel metallocenter. This process requires GTP hydrolysis, probably effectuated by UreG. The sequence is that of Urease accessory protein UreG from Rhizobium etli (strain CIAT 652).